Reading from the N-terminus, the 101-residue chain is Interleukin-8 (101 aa).

A signal peptide spans 1–22 (MTSKLVVALLAAFMLSAALCEA). The residue at position 27 (R27) is a Citrulline. Intrachain disulfides connect C34-C61 and C36-C77.

It belongs to the intercrine alpha (chemokine CxC) family. In terms of assembly, homodimer. Interacts with TNFAIP6 (via Link domain); this interaction interferes with chemokine binding to glycosaminoglycans. Citrullination at Arg-27 prevents proteolysis, and dampens tissue inflammation, it also enhances leukocytosis, possibly through impaired chemokine clearance from the blood circulation.

It is found in the secreted. Its function is as follows. Chemotactic factor that mediates inflammatory response by attracting neutrophils, basophils, and T-cells to clear pathogens and protect the host from infection. Also plays an important role in neutrophil activation. Released in response to an inflammatory stimulus, exerts its effect by binding to the G-protein-coupled receptors CXCR1 and CXCR2, primarily found in neutrophils, monocytes and endothelial cells. G-protein heterotrimer (alpha, beta, gamma subunits) constitutively binds to CXCR1/CXCR2 receptor and activation by IL8 leads to beta and gamma subunits release from Galpha (GNAI2 in neutrophils) and activation of several downstream signaling pathways including PI3K and MAPK pathways. In Felis catus (Cat), this protein is Interleukin-8 (CXCL8).